The sequence spans 355 residues: dTDP-D-glucose 4,6-dehydratase (355 aa).

Thr142 provides a ligand contact to substrate. Residue Asp143 is the Proton donor of the active site. Catalysis depends on proton acceptor residues Glu144 and Tyr166.

Belongs to the NAD(P)-dependent epimerase/dehydratase family. dTDP-glucose dehydratase subfamily. Requires NAD(+) as cofactor.

It carries out the reaction dTDP-alpha-D-glucose = dTDP-4-dehydro-6-deoxy-alpha-D-glucose + H2O. In Bos taurus (Bovine), this protein is dTDP-D-glucose 4,6-dehydratase (TGDS).